We begin with the raw amino-acid sequence, 183 residues long: Ribulose bisphosphate carboxylase small subunit, chloroplastic 3 (183 aa).

The transit peptide at 1 to 43 directs the protein to the chloroplast; the sequence is MATTMLNRSVIVNKEVAKTPNFPRATKNNKGFASNAAVQKCRD.

It belongs to the RuBisCO small chain family. Heterohexadecamer of 8 large and 8 small subunits.

Its subcellular location is the plastid. The protein resides in the chloroplast. Functionally, ruBisCO catalyzes two reactions: the carboxylation of D-ribulose 1,5-bisphosphate, the primary event in carbon dioxide fixation, as well as the oxidative fragmentation of the pentose substrate. Both reactions occur simultaneously and in competition at the same active site. Although the small subunit is not catalytic it is essential for maximal activity. The polypeptide is Ribulose bisphosphate carboxylase small subunit, chloroplastic 3 (Acetabularia peniculus (Green alga)).